The sequence spans 110 residues: ATP-dependent Clp protease adapter protein ClpS 2 (110 aa).

A disordered region spans residues 1-24; it reads MSNDENRSGSPTGPNTSVITKVKP. Polar residues predominate over residues 8–19; sequence SGSPTGPNTSVI.

This sequence belongs to the ClpS family. As to quaternary structure, binds to the N-terminal domain of the chaperone ClpA.

In terms of biological role, involved in the modulation of the specificity of the ClpAP-mediated ATP-dependent protein degradation. The protein is ATP-dependent Clp protease adapter protein ClpS 2 of Bradyrhizobium diazoefficiens (strain JCM 10833 / BCRC 13528 / IAM 13628 / NBRC 14792 / USDA 110).